A 283-amino-acid polypeptide reads, in one-letter code: Beta-glucoside operon antiterminator (283 aa).

2 PRD domains span residues 65-170 and 171-280; these read RIPL…SHMP and EVMR…LQEQ.

This sequence belongs to the transcriptional antiterminator BglG family. Phosphorylated and inactivated by ArbF (EII-Bgl). The degree of phosphorylation is dependent on the presence or absence of beta-glucosides which act as inducers of the operon expression. Addition of inducer result in the rapid dephosphorylation of ArbG.

In terms of biological role, mediates the positive regulation of the beta-glucoside (arb) operon by functioning as a transcriptional antiterminator. This is an RNA-binding protein that recognizes a specific sequence located just upstream of two termination sites within the operon. The chain is Beta-glucoside operon antiterminator (arbG) from Dickeya chrysanthemi (Pectobacterium chrysanthemi).